A 60-amino-acid polypeptide reads, in one-letter code: MAVPKQKRSRSRTHHKRVKIYRPIKVAVSVCPNCGEPKEPHRVCLHCGYYGGKQILEIGE.

Belongs to the bacterial ribosomal protein bL32 family.

The protein is Large ribosomal subunit protein bL32 of Kosmotoga olearia (strain ATCC BAA-1733 / DSM 21960 / TBF 19.5.1).